The following is a 244-amino-acid chain: MRKYYPIIVALDFPEEKRALEIAEKLVPYIKNFKVGLELFSVAGPHIVKALKEMGTNVFIDLKLFDIPNTVVRTLDRLLALEPFMVTLHILGGEEMLRESVKLVSQYKESNKTEYPYLLGVTVLTSFNEETLRRSWGISRSLPEQVLFLAQLAQETGLDGVIASPWEIELLRNNLKRPMLIVTPGIRLTKEKTDDQQRIMTPREALERGSDYLVIGRPITQSPDPYEVIQNIRSQIEDIVESRL.

Residues D12, K34, 61 to 70, T125, R187, Q196, G216, and R217 each bind substrate; that span reads DLKLFDIPNT. K63 acts as the Proton donor in catalysis.

It belongs to the OMP decarboxylase family. Type 1 subfamily. As to quaternary structure, homodimer.

It catalyses the reaction orotidine 5'-phosphate + H(+) = UMP + CO2. The protein operates within pyrimidine metabolism; UMP biosynthesis via de novo pathway; UMP from orotate: step 2/2. Its function is as follows. Catalyzes the decarboxylation of orotidine 5'-monophosphate (OMP) to uridine 5'-monophosphate (UMP). This Dictyoglomus turgidum (strain DSM 6724 / Z-1310) protein is Orotidine 5'-phosphate decarboxylase.